A 338-amino-acid polypeptide reads, in one-letter code: Replication factor C small subunit (338 aa).

Residue 53–60 participates in ATP binding; it reads GPPGVGKT.

This sequence belongs to the activator 1 small subunits family. RfcS subfamily. As to quaternary structure, heteromultimer composed of small subunits (RfcS) and large subunits (RfcL).

Part of the RFC clamp loader complex which loads the PCNA sliding clamp onto DNA. In Methanosarcina acetivorans (strain ATCC 35395 / DSM 2834 / JCM 12185 / C2A), this protein is Replication factor C small subunit.